Consider the following 412-residue polypeptide: CCA-adding enzyme (412 aa).

2 residues coordinate ATP: G8 and R11. G8 and R11 together coordinate CTP. Residues D21 and D23 each contribute to the Mg(2+) site. 3 residues coordinate ATP: R91, R137, and R140. R91, R137, and R140 together coordinate CTP.

Belongs to the tRNA nucleotidyltransferase/poly(A) polymerase family. Bacterial CCA-adding enzyme type 2 subfamily. The cofactor is Mg(2+).

It catalyses the reaction a tRNA precursor + 2 CTP + ATP = a tRNA with a 3' CCA end + 3 diphosphate. It carries out the reaction a tRNA with a 3' CCA end + 2 CTP + ATP = a tRNA with a 3' CCACCA end + 3 diphosphate. Catalyzes the addition and repair of the essential 3'-terminal CCA sequence in tRNAs without using a nucleic acid template. Adds these three nucleotides in the order of C, C, and A to the tRNA nucleotide-73, using CTP and ATP as substrates and producing inorganic pyrophosphate. tRNA 3'-terminal CCA addition is required both for tRNA processing and repair. Also involved in tRNA surveillance by mediating tandem CCA addition to generate a CCACCA at the 3' terminus of unstable tRNAs. While stable tRNAs receive only 3'-terminal CCA, unstable tRNAs are marked with CCACCA and rapidly degraded. This chain is CCA-adding enzyme, found in Buchnera aphidicola subsp. Schizaphis graminum (strain Sg).